The primary structure comprises 219 residues: Segregation and condensation protein B (219 aa).

The disordered stretch occupies residues 193–219; that stretch reads SLFAGGEEPSAEAADGGAGESTHGEEE. Residues 196–207 show a composition bias toward low complexity; sequence AGGEEPSAEAAD.

The protein belongs to the ScpB family. Homodimer. Homodimerization may be required to stabilize the binding of ScpA to the Smc head domains. Component of a cohesin-like complex composed of ScpA, ScpB and the Smc homodimer, in which ScpA and ScpB bind to the head domain of Smc. The presence of the three proteins is required for the association of the complex with DNA.

The protein localises to the cytoplasm. Its function is as follows. Participates in chromosomal partition during cell division. May act via the formation of a condensin-like complex containing Smc and ScpA that pull DNA away from mid-cell into both cell halves. This Symbiobacterium thermophilum (strain DSM 24528 / JCM 14929 / IAM 14863 / T) protein is Segregation and condensation protein B.